The sequence spans 174 residues: Disulfide bond formation protein B (174 aa).

The Cytoplasmic segment spans residues 1–14; that stretch reads MLNFLNICSKTRKS. A helical membrane pass occupies residues 15 to 31; sequence WVLLIFTVVILELIALY. Topologically, residues 32–49 are periplasmic; sequence LQHIVLIKPCVLCVYQRC. A disulfide bridge links C41 with C44. A helical membrane pass occupies residues 50–65; that stretch reads ALCGIGIAGLIGTIAP. The Cytoplasmic segment spans residues 66 to 71; sequence FTPLRF. A helical membrane pass occupies residues 72-89; sequence FSIPIWIYSAWKGLLLAK. Residues 90-144 are Periplasmic-facing; it reads EYTDIQLHPSPFFMCDLFVQFPHWLPLNKWWPSMFDADGDCAEYKWYFLSLEISQ. Cysteines 104 and 130 form a disulfide. A helical transmembrane segment spans residues 145 to 163; it reads WMLIIFANYLIIAILVSLS. The Cytoplasmic segment spans residues 164–174; sequence QIIDLKKWNNK.

It belongs to the DsbB family.

It localises to the cell inner membrane. Functionally, required for disulfide bond formation in some periplasmic proteins. Acts by oxidizing the DsbA protein. In Blochmanniella pennsylvanica (strain BPEN), this protein is Disulfide bond formation protein B.